Consider the following 377-residue polypeptide: ATP synthase gamma chain, chloroplastic (377 aa).

The transit peptide at 1–55 (MSCSNLTMLVSSKPSLSDSSALSFRSSVSPFQLPNHNTSGPSNPSRSSSVTPVHC) directs the protein to the chloroplast. Residues 30–52 (PFQLPNHNTSGPSNPSRSSSVTP) are disordered. Residues 37–52 (NTSGPSNPSRSSSVTP) show a composition bias toward low complexity. C143 is an active-site residue. Residues C253 and C259 are joined by a disulfide bond.

It belongs to the ATPase gamma chain family. F-type ATPases have 2 components, CF(1) - the catalytic core - and CF(0) - the membrane proton channel. CF(1) has five subunits: alpha(3), beta(3), gamma(1), delta(1), epsilon(1). CF(0) has four main subunits: a, b, b' and c.

It is found in the plastid. It localises to the chloroplast thylakoid membrane. Functionally, produces ATP from ADP in the presence of a proton gradient across the membrane. The gamma chain is believed to be important in regulating ATPase activity and the flow of protons through the CF(0) complex. This Nicotiana tabacum (Common tobacco) protein is ATP synthase gamma chain, chloroplastic (ATPC).